A 191-amino-acid chain; its full sequence is Guanylate kinase (191 aa).

Residues 8–188 (GRLVVLAGPS…AVSDIKEILV (181 aa)) enclose the Guanylate kinase-like domain. 15 to 22 (GPSAVGKS) is an ATP binding site.

Belongs to the guanylate kinase family.

The protein resides in the cytoplasm. It catalyses the reaction GMP + ATP = GDP + ADP. Its function is as follows. Essential for recycling GMP and indirectly, cGMP. The chain is Guanylate kinase from Corynebacterium diphtheriae (strain ATCC 700971 / NCTC 13129 / Biotype gravis).